The sequence spans 240 residues: 4-hydroxy-tetrahydrodipicolinate reductase (240 aa).

Residues 79–81 (ATT) and 103–106 (SANM) each bind NAD(+). His-135 acts as the Proton donor/acceptor in catalysis. Residue His-136 participates in (S)-2,3,4,5-tetrahydrodipicolinate binding. The active-site Proton donor is Lys-139. 145–146 (GT) contributes to the (S)-2,3,4,5-tetrahydrodipicolinate binding site.

This sequence belongs to the DapB family.

It localises to the cytoplasm. The catalysed reaction is (S)-2,3,4,5-tetrahydrodipicolinate + NAD(+) + H2O = (2S,4S)-4-hydroxy-2,3,4,5-tetrahydrodipicolinate + NADH + H(+). The enzyme catalyses (S)-2,3,4,5-tetrahydrodipicolinate + NADP(+) + H2O = (2S,4S)-4-hydroxy-2,3,4,5-tetrahydrodipicolinate + NADPH + H(+). It functions in the pathway amino-acid biosynthesis; L-lysine biosynthesis via DAP pathway; (S)-tetrahydrodipicolinate from L-aspartate: step 4/4. Catalyzes the conversion of 4-hydroxy-tetrahydrodipicolinate (HTPA) to tetrahydrodipicolinate. This Staphylococcus aureus (strain MSSA476) protein is 4-hydroxy-tetrahydrodipicolinate reductase.